Reading from the N-terminus, the 518-residue chain is Glutamate--cysteine ligase (518 aa).

Belongs to the glutamate--cysteine ligase type 1 family. Type 1 subfamily.

The catalysed reaction is L-cysteine + L-glutamate + ATP = gamma-L-glutamyl-L-cysteine + ADP + phosphate + H(+). It functions in the pathway sulfur metabolism; glutathione biosynthesis; glutathione from L-cysteine and L-glutamate: step 1/2. The polypeptide is Glutamate--cysteine ligase (Cronobacter sakazakii (strain ATCC BAA-894) (Enterobacter sakazakii)).